The sequence spans 430 residues: Citrate synthase (430 aa).

Active-site residues include His305 and Asp363.

Belongs to the citrate synthase family. As to quaternary structure, homohexamer.

The catalysed reaction is oxaloacetate + acetyl-CoA + H2O = citrate + CoA + H(+). It participates in carbohydrate metabolism; tricarboxylic acid cycle; isocitrate from oxaloacetate: step 1/2. With respect to regulation, allosterically inhibited by NADH. In Coxiella burnetii (strain RSA 493 / Nine Mile phase I), this protein is Citrate synthase (gltA).